The chain runs to 95 residues: Small ubiquitin-related modifier 4 (95 aa).

The Ubiquitin-like domain maps to 17 to 95 (HINLKVAGQD…VLQQQTGGVY (79 aa)). Glycine 93 participates in a covalent cross-link: Glycyl lysine isopeptide (Gly-Lys) (interchain with K-? in acceptor proteins). Residues 94–95 (VY) constitute a propeptide that is removed on maturation.

Belongs to the ubiquitin family. SUMO subfamily. Interacts with SAE2. Covalently attached to a number of proteins.

In terms of biological role, ubiquitin-like protein which can be covalently attached to target lysines as a monomer. Does not seem to be involved in protein degradation and may modulate protein subcellular localization, stability or activity. Upon oxidative stress, conjugates to various anti-oxidant enzymes, chaperones, and stress defense proteins. May also conjugate to NFKBIA, TFAP2A and FOS, negatively regulating their transcriptional activity, and to NR3C1, positively regulating its transcriptional activity. Covalent attachment to its substrates requires prior activation by the E1 complex SAE1-SAE2 and linkage to the E2 enzyme UBE2I. In Sus scrofa (Pig), this protein is Small ubiquitin-related modifier 4 (SUMO4).